The primary structure comprises 93 residues: DNA-directed RNA polymerase subunit omega (93 aa).

This sequence belongs to the RNA polymerase subunit omega family. As to quaternary structure, the RNAP catalytic core consists of 2 alpha, 1 beta, 1 beta' and 1 omega subunit. When a sigma factor is associated with the core the holoenzyme is formed, which can initiate transcription.

It catalyses the reaction RNA(n) + a ribonucleoside 5'-triphosphate = RNA(n+1) + diphosphate. In terms of biological role, promotes RNA polymerase assembly. Latches the N- and C-terminal regions of the beta' subunit thereby facilitating its interaction with the beta and alpha subunits. This Shewanella piezotolerans (strain WP3 / JCM 13877) protein is DNA-directed RNA polymerase subunit omega.